The following is a 320-amino-acid chain: Ferrochelatase (320 aa).

Positions 194 and 275 each coordinate Fe cation.

It belongs to the ferrochelatase family.

The protein localises to the cytoplasm. The catalysed reaction is heme b + 2 H(+) = protoporphyrin IX + Fe(2+). It functions in the pathway porphyrin-containing compound metabolism; protoheme biosynthesis; protoheme from protoporphyrin-IX: step 1/1. Catalyzes the ferrous insertion into protoporphyrin IX. In Enterobacter sp. (strain 638), this protein is Ferrochelatase.